Consider the following 352-residue polypeptide: Pheromone-regulated membrane protein 6 (352 aa).

At 1-36 the chain is on the extracellular side; sequence MESSLQKLKFQDIDINLIPTAKWTTKLQYILYTWCQ. The helical transmembrane segment at 37-57 threads the bilayer; the sequence is SILHVAMFFSDIYTCIKLLAF. Topologically, residues 58-76 are cytoplasmic; sequence NTWSNNIIQPFLEFRISKW. A helical transmembrane segment spans residues 77 to 97; that stretch reads LFSGCILCSSLILIWELVIGL. The Extracellular segment spans residues 98 to 227; the sequence is RVYRKKEITS…VILSFMLFSF (130 aa). The helical transmembrane segment at 228–248 threads the bilayer; the sequence is IIWVILISKLILSIIIFIIFI. At 249 to 352 the chain is on the cytoplasmic side; sequence RPRFLSSKRK…FPQKYKHKYI (104 aa).

It belongs to the KCH1 low affinity K(+) transporter family.

The protein resides in the cell membrane. Its subcellular location is the bud tip. It localises to the vacuole lumen. It carries out the reaction K(+)(in) = K(+)(out). In terms of biological role, low affinity potassium transporter that, with KCH1, participates in high-affinity Ca(2+) influx system (HACS) activation during the response to mating pheromone. Directly promotes K(+) influx and HACS may electrochemically respond to this K(+) influx. KCH1 and PRM6/KCH2 act at the apex of the calcium signaling pathway that is used for survival during prolonged exposures to mating pheromones. The chain is Pheromone-regulated membrane protein 6 from Saccharomyces cerevisiae (strain ATCC 204508 / S288c) (Baker's yeast).